Consider the following 194-residue polypeptide: UPF0232 protein MSMEG_0004/MSMEI_0006 (194 aa).

Over residues 1-14 (MTGPFDDDGPEEDA) the composition is skewed to acidic residues. The tract at residues 1–81 (MTGPFDDDGP…GPGPDARDPQ (81 aa)) is disordered. Basic and acidic residues predominate over residues 30 to 52 (DLVRRTLEEARGAARSQGKDVGR).

The protein belongs to the UPF0232 family.

This Mycolicibacterium smegmatis (strain ATCC 700084 / mc(2)155) (Mycobacterium smegmatis) protein is UPF0232 protein MSMEG_0004/MSMEI_0006.